Reading from the N-terminus, the 357-residue chain is Glucose-6-phosphatase catalytic subunit 1 (357 aa).

Over 1-28 the chain is Lumenal; the sequence is MEEGMNILHDFGIQSTRYLQVNYQDSQD. A helical transmembrane segment spans residues 29–49; that stretch reads WFILVSVIADLRNAFYVLFPI. Topologically, residues 50–60 are cytoplasmic; that stretch reads WFHLKETVGIN. A helical transmembrane segment spans residues 61–81; the sequence is LLWVAVVGDWFNLVFKWILFG. Residues 82-117 lie on the Lumenal side of the membrane; the sequence is QRPYWWVLDTDYYSNSSVPIIKQFPVTCETGPGSPS. Residue Arg-83 coordinates substrate. A glycan (N-linked (GlcNAc...) asparagine) is linked at Asn-96. The chain crosses the membrane as a helical span at residues 118 to 138; the sequence is GHAMGAAGVYYVMVTSTLAIF. His-119 serves as the catalytic Proton donor. Topologically, residues 139–147 are cytoplasmic; it reads RGKKKPTYG. A helical transmembrane segment spans residues 148–168; it reads FRCLNVILWLGFWAVQLNVCL. Residues 169–179 are Lumenal-facing; that stretch reads SRIYLAAHFPH. A substrate-binding site is contributed by Arg-170. His-176 serves as the catalytic Nucleophile. The chain crosses the membrane as a helical span at residues 180-202; that stretch reads QVVAGVLSGIAVAETFSHIRGIY. Residues 203–211 are Cytoplasmic-facing; it reads NASLRKYCL. The chain crosses the membrane as a helical span at residues 212 to 232; sequence ITIFLFGFALGFYLLLKGLGV. At 233 to 254 the chain is on the lumenal side; sequence DLLWTLEKAKRWCERPEWVHLD. A helical membrane pass occupies residues 255–275; sequence TTPFASLFKNLGTLLGLGLAL. At 276 to 291 the chain is on the cytoplasmic side; the sequence is NSSMYRKSCKGELSKL. Residues 292–312 traverse the membrane as a helical segment; that stretch reads LPFRFACIVASLVLLHLFDSL. The Lumenal portion of the chain corresponds to 313–320; sequence KPPSQVEL. The chain crosses the membrane as a helical span at residues 321–341; it reads IFYILSFCKSATVPFASVSLI. Topologically, residues 342–357 are cytoplasmic; sequence PYCLARILGQTHKKSL. A Prevents secretion from ER motif is present at residues 354–357; sequence KKSL.

It belongs to the glucose-6-phosphatase family. As to expression, liver and kidney.

It is found in the endoplasmic reticulum membrane. It catalyses the reaction D-glucose 6-phosphate + H2O = D-glucose + phosphate. It participates in carbohydrate biosynthesis; gluconeogenesis. In terms of biological role, hydrolyzes glucose-6-phosphate to glucose in the endoplasmic reticulum. Forms with the glucose-6-phosphate transporter (SLC37A4/G6PT) the complex responsible for glucose production in the terminal step of glycogenolysis and gluconeogenesis. Hence, it is the key enzyme in homeostatic regulation of blood glucose levels. This chain is Glucose-6-phosphatase catalytic subunit 1 (G6pc1), found in Mus musculus (Mouse).